Here is a 1770-residue protein sequence, read N- to C-terminus: Probable outer membrane protein PmpC (1770 aa).

The N-terminal stretch at 1-20 (MKFMSATAVFAAALSSVTEA) is a signal peptide. Disordered regions lie at residues 73–109 (LPRKHLSSSSEASPTTEGVSSSSSGETDEKTEEELDN), 264–311 (EDTL…GKGG), 481–505 (PAAPSLTEAESDQTDQTETSDTNSD), 611–818 (ESTP…STTE), and 1271–1329 (LRII…TSRT). Positions 85–97 (SPTTEGVSSSSSG) are enriched in low complexity. Over residues 268 to 285 (DSTPETEQTESNGNQDGS) the composition is skewed to polar residues. Low complexity-rich tracts occupy residues 294 to 303 (SESPESTPSP) and 496 to 505 (QTETSDTNSD). Polar residues-rich tracts occupy residues 631-675 (TEDP…TGNA) and 682-703 (QDSTQSNEENTLPNSNIDQSNE). Low complexity-rich tracts occupy residues 719–748 (ESVSSSSESGSSTPQDGGAASSGAPSGDQS) and 762–802 (STDS…GDSA). The segment covering 1303 to 1319 (NNDASNQGESANGSSSP) has biased composition (polar residues). An Autotransporter domain is found at 1477–1770 (EEVSYNNLWI…MMNCGARMTF (294 aa)).

This sequence belongs to the PMP outer membrane protein family.

The protein resides in the secreted. It is found in the cell wall. The protein localises to the cell outer membrane. This Chlamydia trachomatis serovar D (strain ATCC VR-885 / DSM 19411 / UW-3/Cx) protein is Probable outer membrane protein PmpC (pmpC).